Consider the following 156-residue polypeptide: Small ribosomal subunit protein uS7 (156 aa).

This sequence belongs to the universal ribosomal protein uS7 family. As to quaternary structure, part of the 30S ribosomal subunit. Contacts proteins S9 and S11.

One of the primary rRNA binding proteins, it binds directly to 16S rRNA where it nucleates assembly of the head domain of the 30S subunit. Is located at the subunit interface close to the decoding center, probably blocks exit of the E-site tRNA. The polypeptide is Small ribosomal subunit protein uS7 (Citrifermentans bemidjiense (strain ATCC BAA-1014 / DSM 16622 / JCM 12645 / Bem) (Geobacter bemidjiensis)).